A 1076-amino-acid polypeptide reads, in one-letter code: Enhancer of mRNA-decapping protein 4-like protein pdc1 (1076 aa).

2 stretches are compositionally biased toward low complexity: residues 1–19 (MNEQ…LPNL) and 53–69 (SSLL…SNQS). 3 disordered regions span residues 1–82 (MNEQ…ASHS), 95–127 (GAKP…FNPV), and 139–204 (STGP…AEEQ). Polar residues predominate over residues 70-82 (PSNSGPKYYASHS). Residues 153-173 (NDSQDTAFQSSRNMPSDTSVA) are compositionally biased toward polar residues. Residues 174 to 184 (SPDYSHSQSSS) show a composition bias toward low complexity. Over residues 185 to 195 (PIANYQESGNS) the composition is skewed to polar residues. WD repeat units follow at residues 292–334 (NSPN…STSE) and 402–441 (DTGI…PSTP). 2 disordered regions span residues 666 to 714 (RHST…SPSS) and 892 to 934 (TAPD…PAQG). Positions 669 to 688 (TASPSTVNSGFSTPRSQATG) are enriched in polar residues. 2 positions are modified to phosphoserine: Ser671 and Ser673. Phosphothreonine is present on Thr674. A compositionally biased stretch (basic and acidic residues) spans 695–706 (DKGERFETKDKS). The segment at 789-1076 (MQVALKEEIA…ISEISVASSN (288 aa)) is interaction with dcp2. A Phosphoserine modification is found at Ser1075.

Belongs to the WD repeat EDC4 family. In terms of assembly, interacts with dcp2; via C-terminus.

It is found in the cytoplasm. It localises to the P-body. Involved in P-body formation. Acts as a functional homolog of human EDC4, which plays a role in mRNA decapping in the process of mRNA degradation. Enhances the decapping activity of dcp2. Together with edc3, acts as a scaffolding protein sufficient for the phase transition of the components of the 5' to 3' mRNA degradation machinery to form P-bodies. Intermolecular interactions between the edc3 Sm domain and at least 10 helical leucine-rich motifs in dcp2 and pdc1 build the core of the interaction network of this spontaneous clustering process. In Schizosaccharomyces pombe (strain 972 / ATCC 24843) (Fission yeast), this protein is Enhancer of mRNA-decapping protein 4-like protein pdc1.